Reading from the N-terminus, the 349-residue chain is UDP-glucose 4-epimerase (349 aa).

NAD(+) is bound by residues G10 to I12, D31 to N35, D66 to V67, and K92. S132–T134 is a binding site for substrate. Catalysis depends on Y158, which acts as the Proton acceptor. NAD(+) is bound by residues K162 and Y186. Substrate contacts are provided by residues Y186–N188, N207–L209, T225–Y227, R240, and R303–D306.

It belongs to the NAD(P)-dependent epimerase/dehydratase family. It depends on NAD(+) as a cofactor. As to expression, expressed in gonads, vulva, intestine, hypdermis and nervous system.

The enzyme catalyses UDP-alpha-D-glucose = UDP-alpha-D-galactose. It catalyses the reaction UDP-N-acetyl-alpha-D-glucosamine = UDP-N-acetyl-alpha-D-galactosamine. The protein operates within carbohydrate metabolism; galactose metabolism. Functionally, catalyzes two distinct but analogous reactions: the reversible epimerization of UDP-glucose to UDP-galactose and the reversible epimerization of UDP-N-acetylglucosamine to UDP-N-acetylgalactosamine. The reaction with UDP-Gal plays a critical role in the Leloir pathway of galactose catabolism in which galactose is converted to the glycolytic intermediate glucose 6-phosphate. It contributes to the catabolism of dietary galactose and enables the endogenous biosynthesis of both UDP-Gal and UDP-GalNAc when exogenous sources are limited. Both UDP-sugar interconversions are important for the synthesis of glycoproteins and glycolipids. The protein is UDP-glucose 4-epimerase of Caenorhabditis elegans.